The sequence spans 1006 residues: Unconventional myosin-Id (1006 aa).

The residue at position 2 (A2) is an N-acetylalanine. In terms of domain architecture, Myosin motor spans 9 to 695 (FGKADFVLMD…TLFTLEELRA (687 aa)). Residue 102 to 109 (GESGAGKT) participates in ATP binding. Phosphoserine is present on S200. A Phosphotyrosine modification is found at Y536. The tract at residues 572–594 (MIALVDNLASKEPYYVRCIKPND) is actin-binding. 2 consecutive IQ domains span residues 699-719 (VRVV…MRYK) and 721-741 (TKAA…SYIH). A TH1 domain is found at 812–1005 (GQRADLGLQR…RSGFILSVPG (194 aa)).

Belongs to the TRAFAC class myosin-kinesin ATPase superfamily. Myosin family. In terms of assembly, interacts (via the two IQ motifs) with calmodulin. Binds an additional calmodulin chain via a third, C-terminal region. Interacts with F-actin. In terms of tissue distribution, detected in enterocytes at the intestinal brush border membrane. Detected at the tip of intestinal microvilli (at protein level).

It localises to the cytoplasm. The protein localises to the perikaryon. Its subcellular location is the cell projection. The protein resides in the dendrite. It is found in the early endosome. It localises to the cell cortex. The protein localises to the basolateral cell membrane. In terms of biological role, unconventional myosin that functions as actin-based motor protein with ATPase activity. Plays a role in endosomal protein trafficking, and especially in the transfer of cargo proteins from early to recycling endosomes. Required for normal planar cell polarity in ciliated tracheal cells, for normal rotational polarity of cilia, and for coordinated, unidirectional ciliary movement in the trachea. Required for normal, polarized cilia organization in brain ependymal epithelial cells. The sequence is that of Unconventional myosin-Id from Mus musculus (Mouse).